A 441-amino-acid chain; its full sequence is Xylose isomerase (441 aa).

Catalysis depends on residues His-99 and Asp-102. Mg(2+)-binding residues include Glu-230, Glu-266, His-269, Asp-294, Asp-305, Asp-307, and Asp-337.

Belongs to the xylose isomerase family. In terms of assembly, homotetramer. Mg(2+) is required as a cofactor.

The protein resides in the cytoplasm. It catalyses the reaction alpha-D-xylose = alpha-D-xylulofuranose. In terms of biological role, exhibits xylose isomerase activity. The chain is Xylose isomerase (xylA) from Bacillus sp. (strain LW2).